The primary structure comprises 211 residues: Glycerol-3-phosphate acyltransferase 2 (211 aa).

Helical transmembrane passes span 6-26 (FASL…VVVG), 57-77 (IIVF…PVIF), 82-102 (HYLC…PIFL), 124-144 (FFLI…MVSL), and 148-168 (ISVV…LSII).

This sequence belongs to the PlsY family. Probably interacts with PlsX.

The protein localises to the cell membrane. The enzyme catalyses an acyl phosphate + sn-glycerol 3-phosphate = a 1-acyl-sn-glycero-3-phosphate + phosphate. Its pathway is lipid metabolism; phospholipid metabolism. Functionally, catalyzes the transfer of an acyl group from acyl-phosphate (acyl-PO(4)) to glycerol-3-phosphate (G3P) to form lysophosphatidic acid (LPA). This enzyme utilizes acyl-phosphate as fatty acyl donor, but not acyl-CoA or acyl-ACP. The protein is Glycerol-3-phosphate acyltransferase 2 of Lactobacillus acidophilus (strain ATCC 700396 / NCK56 / N2 / NCFM).